The chain runs to 242 residues: Pyr4-family terpene cyclase mfmH (242 aa).

The next 4 membrane-spanning stretches (helical) occupy residues 25–45 (VQDG…ILYI), 55–75 (GMPL…GAAI), 80–100 (AQVV…YTTW), and 116–136 (NLGW…WAFL). N-linked (GlcNAc...) asparagine glycosylation is present at N170. Helical transmembrane passes span 175 to 195 (SWGI…IFVW) and 211 to 231 (VTIF…FVYA).

The protein belongs to the paxB family.

Its subcellular location is the membrane. Its pathway is secondary metabolite biosynthesis; terpenoid biosynthesis. Functionally, terpene cyclase; part of the gene cluster that mediates the biosynthesis of the phthalide-terpenoid hybrid 11'-O-desmethylfendlerol. Within the pathway, mfmH catalyzes the last step and cyclizes the prenyl unit of 5-O-farnesylcyclopolic acid into a drimane-like structure to yield 11'-O-desmethylfendlerol. The biosynthesis of 11'-O-desmethylfendlerol begins with the NR-PKS mfmB that forms 3,5-dimethylorsellinic acid (DMOA), which is then transformed into the phthalide 5,7-dihydroxy-4-(hydroxymethyl)-6-methylphthalide by the cytochrome P450 monooxygenase mfmA and the hydrolase mfmC. Subsequently, the methyltransferase mfmE catalyzes 7-O-methylation to yield 5-hydroxy-4-(hydroxymethyl)-7-methoxy-6-methylphthalide, which undergoes C-3 hydroxylation by the cytochrome P450 monooxygenase mfmF. The resultant cyclopolic acid (2,5-dihydroxy-4-(hydroxymethyl)-7-methoxy-6-methylphthalide) is then farnesylated by the DMATS-type prenyltransferase mfmD to afford 5-O-farnesylcyclopolic acid. Finally, the Pyr4-family terpene cyclase mfmH cyclizes the farnesyl moiety of 5-O-farnesylcyclopolic acid into a drimane-like structure, thus completing the biosynthesis of 11'-O-desmethylfendlerol. The polypeptide is Pyr4-family terpene cyclase mfmH (Annulohypoxylon moriforme (Filamentous fungus)).